A 153-amino-acid chain; its full sequence is Aspartate carbamoyltransferase regulatory chain (153 aa).

Positions 109, 114, 138, and 141 each coordinate Zn(2+).

It belongs to the PyrI family. As to quaternary structure, contains catalytic and regulatory chains. The cofactor is Zn(2+).

Its function is as follows. Involved in allosteric regulation of aspartate carbamoyltransferase. The chain is Aspartate carbamoyltransferase regulatory chain from Klebsiella pneumoniae subsp. pneumoniae (strain ATCC 700721 / MGH 78578).